The following is a 173-amino-acid chain: MPRTQKNDNFVDKSFTVMADIILKILPTNKKAKEAFVYYRDGMSAQAEGEYAEALEYYEEALTLEEDTNDRGYILYNMGLIYASNGDHDKALELYHQAIELNPRLPQALNNIAVIYHYQGEKAKETGDHDGGEALFDQAADYWIRAIRMAPNNYIEAQNWLKTTGRMQIDVFF.

TPR repeat units follow at residues 35 to 68 (AFVY…EEDT), 72 to 105 (GYIL…NPRL), and 120 to 153 (GEKA…APNN).

This sequence belongs to the Ycf3 family.

The protein resides in the cellular thylakoid membrane. In terms of biological role, essential for the assembly of the photosystem I (PSI) complex. May act as a chaperone-like factor to guide the assembly of the PSI subunits. This is Photosystem I assembly protein Ycf3 from Nostoc sp. (strain PCC 7120 / SAG 25.82 / UTEX 2576).